The chain runs to 412 residues: 23S rRNA (uracil(747)-C(5))-methyltransferase (412 aa).

The [4Fe-4S] cluster site is built by Cys63, Cys69, Cys72, and Cys139. Residues Gln255, Tyr281, Glu302, and Asp343 each coordinate S-adenosyl-L-methionine. The Nucleophile role is filled by Cys369.

It belongs to the class I-like SAM-binding methyltransferase superfamily. RNA M5U methyltransferase family.

The catalysed reaction is uridine(747) in 23S rRNA + S-adenosyl-L-methionine = 5-methyluridine(747) in 23S rRNA + S-adenosyl-L-homocysteine + H(+). Its function is as follows. Catalyzes the formation of 5-methyl-uridine at position equivalent to 747 (m5U747) in 23S rRNA. This Pyrococcus horikoshii (strain ATCC 700860 / DSM 12428 / JCM 9974 / NBRC 100139 / OT-3) protein is 23S rRNA (uracil(747)-C(5))-methyltransferase.